Here is a 182-residue protein sequence, read N- to C-terminus: Ribosome-recycling factor (182 aa).

The interval 136 to 156 is disordered; the sequence is VKKQEKDGDFSEDQSRDEQDS.

This sequence belongs to the RRF family.

The protein localises to the cytoplasm. Functionally, responsible for the release of ribosomes from messenger RNA at the termination of protein biosynthesis. May increase the efficiency of translation by recycling ribosomes from one round of translation to another. The polypeptide is Ribosome-recycling factor (Synechococcus sp. (strain CC9902)).